We begin with the raw amino-acid sequence, 189 residues long: Transcriptional repressor NrdR (189 aa).

A zinc finger spans residues 3-34; the sequence is CPFCRGDDSRVVDSREVEDGQAIRRRRSCSGC. The 91-residue stretch at 46-136 folds into the ATP-cone domain; that stretch reads LSVVKRSGVT…VYRAFSSVED (91 aa). The tract at residues 152-189 is disordered; that stretch reads RLPEGPEAAQGGPESKAGNGQAAGSGDPEGVKAEKSSE. Positions 180–189 are enriched in basic and acidic residues; it reads EGVKAEKSSE.

It belongs to the NrdR family. Requires Zn(2+) as cofactor.

Negatively regulates transcription of bacterial ribonucleotide reductase nrd genes and operons by binding to NrdR-boxes. The polypeptide is Transcriptional repressor NrdR (Saccharopolyspora erythraea (strain ATCC 11635 / DSM 40517 / JCM 4748 / NBRC 13426 / NCIMB 8594 / NRRL 2338)).